The following is a 352-amino-acid chain: 2'-dehydrokanamycin reductase (352 aa).

The protein belongs to the NAD(P)-dependent epimerase/dehydratase family.

The catalysed reaction is 2'-dehydrokanamycin A + NADPH + H(+) = kanamycin A + NADP(+). The protein operates within antibiotic biosynthesis; kanamycin biosynthesis. Mediates the conversion of 2'-dehydrokanamycin A into kanamycin A. In Streptomyces kanamyceticus, this protein is 2'-dehydrokanamycin reductase (kanK).